We begin with the raw amino-acid sequence, 212 residues long: N-(5'-phosphoribosyl)anthranilate isomerase (212 aa).

This sequence belongs to the TrpF family.

The catalysed reaction is N-(5-phospho-beta-D-ribosyl)anthranilate = 1-(2-carboxyphenylamino)-1-deoxy-D-ribulose 5-phosphate. Its pathway is amino-acid biosynthesis; L-tryptophan biosynthesis; L-tryptophan from chorismate: step 3/5. This Myxococcus xanthus (strain DK1622) protein is N-(5'-phosphoribosyl)anthranilate isomerase.